The following is a 120-amino-acid chain: Chaperonin GroEL (120 aa).

Residue 23–27 coordinates ATP; it reads DGTTT.

It belongs to the chaperonin (HSP60) family. Forms a cylinder of 14 subunits composed of two heptameric rings stacked back-to-back. Interacts with the co-chaperonin GroES.

The protein localises to the cytoplasm. The enzyme catalyses ATP + H2O + a folded polypeptide = ADP + phosphate + an unfolded polypeptide.. Its function is as follows. Together with its co-chaperonin GroES, plays an essential role in assisting protein folding. The GroEL-GroES system forms a nano-cage that allows encapsulation of the non-native substrate proteins and provides a physical environment optimized to promote and accelerate protein folding. The sequence is that of Chaperonin GroEL from Mycobacterium gordonae.